Here is a 365-residue protein sequence, read N- to C-terminus: Pre-small/secreted glycoprotein (365 aa).

Positions 1 to 32 (MGASGILQLPRERFRKTSFFVWVIILFHKVFS) are cleaved as a signal peptide. N-linked (GlcNAc...) asparagine; by host glycosylation is present at Asn40. 2 cysteine pairs are disulfide-bonded: Cys108–Cys135 and Cys121–Cys147. N-linked (GlcNAc...) asparagine; by host glycans are attached at residues Asn204, Asn228, Asn257, and Asn268.

The protein belongs to the filoviruses glycoprotein family. Homodimer; disulfide-linked. The homodimers are linked by two disulfide bonds in a parallel orientation. In terms of assembly, monomer. Post-translationally, this precursor is processed into mature sGP and delta-peptide by host furin or furin-like proteases. The cleavage site corresponds to the furin optimal cleavage sequence [KR]-X-[KR]-R. N-glycosylated. In terms of processing, O-glycosylated.

Its subcellular location is the secreted. In terms of biological role, seems to possess an anti-inflammatory activity as it can reverse the barrier-decreasing effects of TNF alpha. Might therefore contribute to the lack of inflammatory reaction seen during infection in spite the of extensive necrosis and massive virus production. Does not seem to be involved in activation of primary macrophages. Does not seem to interact specifically with neutrophils. Functionally, viroporin that permeabilizes mammalian cell plasma membranes. It acts by altering permeation of ionic compounds and small molecules. This activity may lead to viral enterotoxic activity. This is Pre-small/secreted glycoprotein (GP) from Epomops franqueti (Franquet's epauletted fruit bat).